Consider the following 105-residue polypeptide: Tyrosine-protein phosphatase 12 (105 aa).

The Tyrosine-protein phosphatase domain maps to 1–105; sequence WRMIWEKRVE…NLRRIVRTEF (105 aa). Asp-84 is a substrate binding site.

Belongs to the protein-tyrosine phosphatase family.

The catalysed reaction is O-phospho-L-tyrosyl-[protein] + H2O = L-tyrosyl-[protein] + phosphate. In Styela plicata (Wrinkled sea squirt), this protein is Tyrosine-protein phosphatase 12 (STY-12).